The sequence spans 276 residues: Small ribosomal subunit protein uS2 (276 aa).

The segment at 251-276 is disordered; sequence AEEAPAAAEEAPAAEPAAEETPAAEA. Residues 252 to 276 show a composition bias toward low complexity; it reads EEAPAAAEEAPAAEPAAEETPAAEA.

Belongs to the universal ribosomal protein uS2 family.

The polypeptide is Small ribosomal subunit protein uS2 (Jannaschia sp. (strain CCS1)).